Consider the following 469-residue polypeptide: Glutamate--tRNA ligase (469 aa).

The short motif at 11–21 (PSPTGFIHLGN) is the 'HIGH' region element. Residues 118–131 (GEKPRYDGTWRPEP) are compositionally biased toward basic and acidic residues. Residues 118 to 139 (GEKPRYDGTWRPEPGKVLPEPP) form a disordered region. The short motif at 243-247 (KMSKR) is the 'KMSKS' region element. Lys246 is an ATP binding site.

This sequence belongs to the class-I aminoacyl-tRNA synthetase family. Glutamate--tRNA ligase type 1 subfamily. In terms of assembly, monomer.

The protein localises to the cytoplasm. It catalyses the reaction tRNA(Glu) + L-glutamate + ATP = L-glutamyl-tRNA(Glu) + AMP + diphosphate. Functionally, catalyzes the attachment of glutamate to tRNA(Glu) in a two-step reaction: glutamate is first activated by ATP to form Glu-AMP and then transferred to the acceptor end of tRNA(Glu). In Burkholderia pseudomallei (strain 668), this protein is Glutamate--tRNA ligase.